The sequence spans 215 residues: Probable phosphoglycerate mutase GpmB (215 aa).

Substrate contacts are provided by residues R8–N15, Q21–G22, R58, R60, E82–M85, R104–R105, and G151–I152. H9 functions as the Tele-phosphohistidine intermediate in the catalytic mechanism. The active-site Proton donor/acceptor is E82.

This sequence belongs to the phosphoglycerate mutase family. GpmB subfamily.

The catalysed reaction is (2R)-2-phosphoglycerate = (2R)-3-phosphoglycerate. It functions in the pathway carbohydrate degradation; glycolysis; pyruvate from D-glyceraldehyde 3-phosphate: step 3/5. This Klebsiella pneumoniae (strain 342) protein is Probable phosphoglycerate mutase GpmB.